Here is a 651-residue protein sequence, read N- to C-terminus: DNA endonuclease RBBP8 (651 aa).

2 coiled-coil regions span residues Leu35 to Leu84 and Ile117 to Leu138. Disordered stretches follow at residues Leu138–Arg199, Asn363–Ala433, and Tyr487–Ser539. The span at Asn363–Thr379 shows a compositional bias: polar residues. Over residues Gln380–Thr391 the composition is skewed to basic and acidic residues. Over residues Val503–Glu515 the composition is skewed to acidic residues. Over residues Arg525–Ser539 the composition is skewed to basic and acidic residues. 2 positions are modified to phosphothreonine: Thr599 and Thr611.

Belongs to the COM1/SAE2/CtIP family. As to quaternary structure, homotetramer; formed by antiparallel association of helical extensions protruding from the N-termini of two parallel coiled-coil dimers. Interacts with the MRN complex; the interaction links DNA sensing to resection. Interacts with samhd1. Post-translationally, phosphorylation at Thr-599 and Thr-611 promote interaction with nbn and recruitment to double-strand breaks (DSBs).

It is found in the nucleus. It localises to the chromosome. Endonuclease that cooperates with the MRE11-RAD50-NBN (MRN) complex in DNA-end resection, the first step of double-strand break (DSB) repair through the homologous recombination (HR) pathway. Functions downstream of the MRN complex and ATM, promotes ATR activation and its recruitment to DSBs in the S/G2 phase facilitating the generation of ssDNA. Specifically promotes the endonuclease activity of the MRN complex to clear DNA ends containing protein adducts: recruited to DSBs by nbn following phosphorylation, and promotes the endonuclease of mre11 to clear protein-DNA adducts and generate clean double-strand break ends. This chain is DNA endonuclease RBBP8 (rbbp8), found in Danio rerio (Zebrafish).